The following is a 265-amino-acid chain: Uronate dehydrogenase (265 aa).

Residues 12-13 (QL), 32-34 (DLS), 49-50 (DL), and 69-73 (LGGIS) each bind NAD(+). Residues serine 73 and 109 to 111 (SNH) contribute to the substrate site. Residue tyrosine 134 is the Proton acceptor of the active site. Lysine 138 serves as a coordination point for NAD(+). Serine 163 is a substrate binding site. Cysteine 164 contacts NAD(+). Residue arginine 172 participates in substrate binding.

It belongs to the NAD(P)-dependent epimerase/dehydratase family. Homohexamer.

It catalyses the reaction beta-D-galacturonate + NAD(+) = D-galactaro-1,5-lactone + NADH + H(+). The catalysed reaction is beta-D-glucuronate + NAD(+) = D-glucaro-1,5-lactone + NADH + H(+). It participates in carbohydrate acid metabolism; D-galacturonate degradation via prokaryotic oxidative pathway. Functionally, catalyzes the oxidation of D-galacturonate and D-glucuronate to galactarate and D-glucarate, respectively. In fact, in water solution the substrate D-galacturonate is predominantly in pyranosic form whose beta anomer is converted by the enzyme to D-galactaro-1,5-lactone; in solution, this reaction product rearranges to the more stable D-galactaro-1,4-lactone. Makes part of the oxidative degradation pathway of D-galacturonate, which allows A.tumefaciens to utilize D-galacturonate as a sole carbon source. Cannot use NADP(+) instead of NAD(+) as cosubstrate. Is not active on D-galactose, D-glucose, D-galactonate and D-gluconate. In Agrobacterium fabrum (strain C58 / ATCC 33970) (Agrobacterium tumefaciens (strain C58)), this protein is Uronate dehydrogenase (udh).